Reading from the N-terminus, the 330-residue chain is Global transcription regulator sge1 (330 aa).

Disordered stretches follow at residues 93–123 (PPGEKKRARGRNGKSTTQSGGITKSRPRNSV) and 239–306 (QYAP…HQPQ). Residues 105–114 (GKSTTQSGGI) show a composition bias toward polar residues. Residues 250–306 (QQPALQQQPQQQPQPQHQPQLQYQPQPHQHQPQLQYQPQQQHQPQQQYRPQPQHQPQ) are compositionally biased toward low complexity.

The protein belongs to the MIT1/WOR1 family.

The protein localises to the nucleus. Its function is as follows. Global transcriptional regulator of pathogenicity. Acts as an activator of parasitic growth. Not essential for colonization or penetration of the root surface, but required for expression of genes encoding effectors that are secreted during infection. Involved in conidiogenesis, but is not required for conidial fitness, overall (colony) morphology, vegetative growth or carbon source utilization. This is Global transcription regulator sge1 from Fusarium oxysporum f. sp. lycopersici (strain 4287 / CBS 123668 / FGSC 9935 / NRRL 34936) (Fusarium vascular wilt of tomato).